We begin with the raw amino-acid sequence, 422 residues long: Transcription termination factor Rho (422 aa).

The 76-residue stretch at 52-127 (EVGGDGVLEV…TRVTKINFDD (76 aa)) folds into the Rho RNA-BD domain. ATP is bound by residues 173–178 (GKGQRG), 185–190 (RTGKTV), and Arg216.

The protein belongs to the Rho family. In terms of assembly, homohexamer. The homohexamer assembles into an open ring structure.

Its function is as follows. Facilitates transcription termination by a mechanism that involves Rho binding to the nascent RNA, activation of Rho's RNA-dependent ATPase activity, and release of the mRNA from the DNA template. This chain is Transcription termination factor Rho, found in Cereibacter sphaeroides (strain ATCC 17023 / DSM 158 / JCM 6121 / CCUG 31486 / LMG 2827 / NBRC 12203 / NCIMB 8253 / ATH 2.4.1.) (Rhodobacter sphaeroides).